The chain runs to 208 residues: Large ribosomal subunit protein uL4 (208 aa).

Residues 44-76 (RRQGTQSTKTKSEVRGGGRKPWRQKGTGRARHG) are disordered. The segment covering 60-76 (GGRKPWRQKGTGRARHG) has biased composition (basic residues).

Belongs to the universal ribosomal protein uL4 family. In terms of assembly, part of the 50S ribosomal subunit.

Its function is as follows. One of the primary rRNA binding proteins, this protein initially binds near the 5'-end of the 23S rRNA. It is important during the early stages of 50S assembly. It makes multiple contacts with different domains of the 23S rRNA in the assembled 50S subunit and ribosome. Functionally, forms part of the polypeptide exit tunnel. The sequence is that of Large ribosomal subunit protein uL4 from Acetivibrio thermocellus (strain ATCC 27405 / DSM 1237 / JCM 9322 / NBRC 103400 / NCIMB 10682 / NRRL B-4536 / VPI 7372) (Clostridium thermocellum).